A 262-amino-acid chain; its full sequence is Glucosamine-6-phosphate deaminase (262 aa).

The active-site Proton acceptor; for enolization step is the aspartate 63. Catalysis depends on asparagine 129, which acts as the For ring-opening step. Histidine 131 serves as the catalytic Proton acceptor; for ring-opening step. Glutamate 136 (for ring-opening step) is an active-site residue.

This sequence belongs to the glucosamine/galactosamine-6-phosphate isomerase family. NagB subfamily.

The enzyme catalyses alpha-D-glucosamine 6-phosphate + H2O = beta-D-fructose 6-phosphate + NH4(+). The protein operates within amino-sugar metabolism; N-acetylneuraminate degradation; D-fructose 6-phosphate from N-acetylneuraminate: step 5/5. Catalyzes the reversible isomerization-deamination of glucosamine 6-phosphate (GlcN6P) to form fructose 6-phosphate (Fru6P) and ammonium ion. This is Glucosamine-6-phosphate deaminase from Bacillus cereus (strain B4264).